The following is a 199-amino-acid chain: dITP/XTP pyrophosphatase (199 aa).

Substrate is bound at residue threonine 9–lysine 14. Residues glutamate 41 and aspartate 70 each coordinate Mg(2+). Residue aspartate 70 is the Proton acceptor of the active site. Substrate is bound by residues serine 71, phenylalanine 157 to aspartate 160, lysine 180, and histidine 185 to arginine 186.

This sequence belongs to the HAM1 NTPase family. In terms of assembly, homodimer. Requires Mg(2+) as cofactor.

The enzyme catalyses XTP + H2O = XMP + diphosphate + H(+). It catalyses the reaction dITP + H2O = dIMP + diphosphate + H(+). It carries out the reaction ITP + H2O = IMP + diphosphate + H(+). In terms of biological role, pyrophosphatase that catalyzes the hydrolysis of nucleoside triphosphates to their monophosphate derivatives, with a high preference for the non-canonical purine nucleotides XTP (xanthosine triphosphate), dITP (deoxyinosine triphosphate) and ITP. Seems to function as a house-cleaning enzyme that removes non-canonical purine nucleotides from the nucleotide pool, thus preventing their incorporation into DNA/RNA and avoiding chromosomal lesions. The sequence is that of dITP/XTP pyrophosphatase from Mannheimia succiniciproducens (strain KCTC 0769BP / MBEL55E).